A 693-amino-acid polypeptide reads, in one-letter code: MPLTRSKSLPATENGGSDRETLQSGRSVAGILYKWTNYGKGWRSRWFLLRDGILSYSKIRRPENVNLLSPSDDLRLIGDISTDRLLRMKSCSGRSRRKHHKNIGIVHLKVSSYRESKSDHRKFYIFTATKTLHLRTDSRSDRAAWLQALASTRGIVPLQSINGDFSFVSPKDLSISTERLKKRLFEEGMNESLVKECEQIVDSEFCEVQEQIKLLHEERKKLLDALRQLEMANLEAEASGIHDDVYQLRNHKYSSLGRGKYSECSTSASSDDKQEFEDISEEDEASFHDTKESFGEPDVGSVLTHFKRRTKLPDPAEKERGVSLWSMIKDNVGKDLTRVCLPVYFNEPISSLQKCFEDLEYSYLLDQAYEYGKSGKSLLRALNVAAFAVSGYASTEGRHCKPFNPLLGETYEADFPEKGIRFFSEKVSHHPTVIACHCEGKGWKFWGDTNLRSKFWGRSIQLEPVGILTLEFDDGEIFQWSKVTTTIYNILLGKLYCDHHGIMKIRGNRQYSCMLKFKEQSILDRNPHQVNGFVEDVTGKKAATVFGKWNDSLYYVAGDGINKASASLLWKATKAPPNVTRYNFTSFAMTLNELIPGLEEKLPPTDSRLRPDQRHLENGEYEKANEEKQRLERRQRMSRQIQESGWRPRWFEPQGESESYKYTGGYWEARDVKSWDDCPNIFGEFTEEVADCA.

The segment covering 1–15 (MPLTRSKSLPATENG) has biased composition (polar residues). Residues 1 to 22 (MPLTRSKSLPATENGGSDRETL) are disordered. Residues 25–154 (GRSVAGILYK…WLQALASTRG (130 aa)) form the PH domain. Positions 207 to 239 (EVQEQIKLLHEERKKLLDALRQLEMANLEAEAS) form a coiled coil. 2 disordered regions span residues 256 to 298 (LGRG…GEPD) and 600 to 639 (EKLP…RMSR). Over residues 274-284 (QEFEDISEEDE) the composition is skewed to acidic residues. 2 stretches are compositionally biased toward basic and acidic residues: residues 285–294 (ASFHDTKESF) and 600–635 (EKLP…ERRQ). The stretch at 612 to 643 (DQRHLENGEYEKANEEKQRLERRQRMSRQIQE) forms a coiled coil.

This sequence belongs to the OSBP family. As to expression, expressed in roots, leaves, stems and flowers.

Functionally, may be involved in the transport of sterols. This Arabidopsis thaliana (Mouse-ear cress) protein is Oxysterol-binding protein-related protein 2B (ORP2B).